Consider the following 100-residue polypeptide: uncharacterized protein (100 aa).

The segment at 78–100 (KPYRTESGTSSSNRMMLPPRQHV) is disordered.

This is an uncharacterized protein from Caenorhabditis elegans.